The sequence spans 361 residues: tRNA 2-selenouridine synthase (361 aa).

The region spanning 11-134 is the Rhodanese domain; sequence LLADTPLIDV…LRQTAIQATW (124 aa). The active-site S-selanylcysteine intermediate is the Cys-94.

It belongs to the SelU family. Monomer.

The enzyme catalyses 5-methylaminomethyl-2-thiouridine(34) in tRNA + selenophosphate + (2E)-geranyl diphosphate + H2O + H(+) = 5-methylaminomethyl-2-selenouridine(34) in tRNA + (2E)-thiogeraniol + phosphate + diphosphate. The catalysed reaction is 5-methylaminomethyl-2-thiouridine(34) in tRNA + (2E)-geranyl diphosphate = 5-methylaminomethyl-S-(2E)-geranyl-thiouridine(34) in tRNA + diphosphate. It catalyses the reaction 5-methylaminomethyl-S-(2E)-geranyl-thiouridine(34) in tRNA + selenophosphate + H(+) = 5-methylaminomethyl-2-(Se-phospho)selenouridine(34) in tRNA + (2E)-thiogeraniol. It carries out the reaction 5-methylaminomethyl-2-(Se-phospho)selenouridine(34) in tRNA + H2O = 5-methylaminomethyl-2-selenouridine(34) in tRNA + phosphate. Functionally, involved in the post-transcriptional modification of the uridine at the wobble position (U34) of tRNA(Lys), tRNA(Glu) and tRNA(Gln). Catalyzes the conversion of 2-thiouridine (S2U-RNA) to 2-selenouridine (Se2U-RNA). Acts in a two-step process involving geranylation of 2-thiouridine (S2U) to S-geranyl-2-thiouridine (geS2U) and subsequent selenation of the latter derivative to 2-selenouridine (Se2U) in the tRNA chain. The chain is tRNA 2-selenouridine synthase from Salmonella schwarzengrund (strain CVM19633).